We begin with the raw amino-acid sequence, 304 residues long: Non-specific ribonucleoside hydrolase RihC (304 aa).

H233 is a catalytic residue.

This sequence belongs to the IUNH family. RihC subfamily.

Its function is as follows. Hydrolyzes both purine and pyrimidine ribonucleosides with a broad-substrate specificity. This Shigella flexneri serotype 5b (strain 8401) protein is Non-specific ribonucleoside hydrolase RihC.